The following is a 449-amino-acid chain: Tubulin alpha chain (449 aa).

The MREC motif signature appears at 1-4 (MREC). Glutamine 11 contacts GTP. N6-acetyllysine is present on lysine 40. GTP contacts are provided by glutamate 71, serine 140, glycine 144, threonine 145, threonine 179, asparagine 206, and asparagine 228. A Mg(2+)-binding site is contributed by glutamate 71. Residue glutamate 254 is part of the active site. The tract at residues 430 to 449 (KDYEEVGADSADAEDEGEEY) is disordered. Positions 431 to 449 (DYEEVGADSADAEDEGEEY) are enriched in acidic residues.

This sequence belongs to the tubulin family. Dimer of alpha and beta chains. A typical microtubule is a hollow water-filled tube with an outer diameter of 25 nm and an inner diameter of 15 nM. Alpha-beta heterodimers associate head-to-tail to form protofilaments running lengthwise along the microtubule wall with the beta-tubulin subunit facing the microtubule plus end conferring a structural polarity. Microtubules usually have 13 protofilaments but different protofilament numbers can be found in some organisms and specialized cells. Requires Mg(2+) as cofactor. In terms of processing, some glutamate residues at the C-terminus are polyglycylated, resulting in polyglycine chains on the gamma-carboxyl group. Glycylation is mainly limited to tubulin incorporated into axonemes (cilia and flagella) whereas glutamylation is prevalent in neuronal cells, centrioles, axonemes, and the mitotic spindle. Both modifications can coexist on the same protein on adjacent residues, and lowering polyglycylation levels increases polyglutamylation, and reciprocally. The precise function of polyglycylation is still unclear. Some glutamate residues at the C-terminus are polyglutamylated, resulting in polyglutamate chains on the gamma-carboxyl group. Polyglutamylation plays a key role in microtubule severing by spastin (SPAST). SPAST preferentially recognizes and acts on microtubules decorated with short polyglutamate tails: severing activity by SPAST increases as the number of glutamates per tubulin rises from one to eight, but decreases beyond this glutamylation threshold. Post-translationally, acetylation of alpha chains at Lys-40 is located inside the microtubule lumen. This modification has been correlated with increased microtubule stability, intracellular transport and ciliary assembly. In terms of processing, undergoes a tyrosination/detyrosination cycle, the cyclic removal and re-addition of a C-terminal tyrosine residue by the enzymes tubulin tyrosine carboxypeptidase (MATCAP1, VASH1 or VASH2) and tubulin tyrosine ligase (TTL), respectively. Tyrosination promotes microtubule interaction with CAP-Gly microtubule plus-end tracking proteins. Tyrosinated tubulins regulate the initiation of dynein-driven motility. Post-translationally, detyrosination is involved in metaphase plate congression by guiding chromosomes during mitosis. Detyrosination increases microtubules-dependent mechanotransduction in dystrophic cardiac and skeletal muscle. In cardiomyocytes, detyrosinated microtubules are required to resist to contractile compression during contraction.

The protein localises to the cytoplasm. It localises to the cytoskeleton. The catalysed reaction is GTP + H2O = GDP + phosphate + H(+). Its function is as follows. Tubulin is the major constituent of microtubules, a cylinder consisting of laterally associated linear protofilaments composed of alpha- and beta-tubulin heterodimers. Microtubules grow by the addition of GTP-tubulin dimers to the microtubule end, where a stabilizing cap forms. Below the cap, tubulin dimers are in GDP-bound state, owing to GTPase activity of alpha-tubulin. The polypeptide is Tubulin alpha chain (tuba) (Xenopus laevis (African clawed frog)).